The chain runs to 167 residues: UPF0114 protein in repA1-repA2 intergenic region (167 aa).

The next 3 helical transmembrane spans lie at 15–35 (LMFP…LKFF), 53–73 (LVLV…LVMV), and 136–156 (IMLC…MAYI).

It belongs to the UPF0114 family.

Its subcellular location is the cell membrane. The chain is UPF0114 protein in repA1-repA2 intergenic region from Buchnera aphidicola subsp. Diuraphis noxia.